A 344-amino-acid chain; its full sequence is Aromatic amino acid aminotransferase (344 aa).

Lys-213 is modified (N6-(pyridoxal phosphate)lysine).

Belongs to the class-II pyridoxal-phosphate-dependent aminotransferase family. Homodimer. It depends on pyridoxal 5'-phosphate as a cofactor.

The catalysed reaction is an aromatic L-alpha-amino acid + 2-oxoglutarate = an aromatic oxo-acid + L-glutamate. Functionally, aminotransferase that catalyzes the conversion of aromatic amino acids and 2-oxoglutarate into corresponding aromatic oxo acids and L-glutamate. The protein is Aromatic amino acid aminotransferase of Corynebacterium diphtheriae (strain ATCC 700971 / NCTC 13129 / Biotype gravis).